We begin with the raw amino-acid sequence, 602 residues long: Transcription factor COE4 (602 aa).

The segment at 64 to 67 (RKSN) is interaction with DNA. The segment at 152-171 (CRVLLTHEIMCSRCCDRKSC) adopts a C5-type zinc-finger fold. Interaction with DNA regions lie at residues 198–205 (NCLKNAGN) and 237–240 (NNSK). Positions 256-338 (PCIKAISPGE…CKGCPGRFVY (83 aa)) constitute an IPT/TIG domain. Disordered stretches follow at residues 448 to 476 (PEPG…SGYG) and 558 to 602 (PVLR…LAYS). Residues 560 to 569 (LRPPSSPPQA) are compositionally biased toward pro residues.

This sequence belongs to the COE family. As to quaternary structure, forms either a homodimer or a heterodimer with a related family member. Interacts with MAPK3/ERK1. Interacts with STAT5A. In terms of tissue distribution, most highly expressed in cytotoxic NK cells, especially CD16(+) NK cells, followed by CD8(+) T-cells.

The protein localises to the nucleus. Its function is as follows. Transcription factor. Binds to specific sequence motif 5'-CCCNNG[GA]G-3' in regulatory elements of putative target immunoregulatory genes such as NKG7, GZMA, and TBX21. Positively modulates transcription of NKG7. May play a role in regulating FAS/CD95-mediated apoptosis in cytotoxic NK cells and T-cells, probably downstream of interleukin IL2 signaling. The polypeptide is Transcription factor COE4 (EBF4) (Homo sapiens (Human)).